Consider the following 185-residue polypeptide: Peptidyl-tRNA hydrolase (185 aa).

Y14 is a binding site for tRNA. Catalysis depends on H19, which acts as the Proton acceptor. TRNA contacts are provided by Y65, N67, and N113.

Belongs to the PTH family. In terms of assembly, monomer.

Its subcellular location is the cytoplasm. The enzyme catalyses an N-acyl-L-alpha-aminoacyl-tRNA + H2O = an N-acyl-L-amino acid + a tRNA + H(+). Its function is as follows. Hydrolyzes ribosome-free peptidyl-tRNAs (with 1 or more amino acids incorporated), which drop off the ribosome during protein synthesis, or as a result of ribosome stalling. Functionally, catalyzes the release of premature peptidyl moieties from peptidyl-tRNA molecules trapped in stalled 50S ribosomal subunits, and thus maintains levels of free tRNAs and 50S ribosomes. The chain is Peptidyl-tRNA hydrolase from Rickettsia bellii (strain RML369-C).